The following is a 638-amino-acid chain: MATIFDSLISSRLDGTRFSFYNDEEIQQMSVKEIHNPMAYDELNNPTSHGICDESMGVSALDKLSKCKTCGCDSVYCPGHMGHIKLTSTCYNPFTMKLLHSLLKSKCLVCHRLRISPKRIELFEIRLKLIKLGYLVEAEKLSDFNHFSLESIDSAIRILRKKTKGKTNKKEEKEDSEEVEEDKYAAKEALENLIQKEKENREIFYSHISSILQEDTPNESIGNAITVAIRDITKEIMNSVVPSKCPHCDVCNPRIKKDGATKFFQMPLSNRDTKAMLSSHGRIDMRIDISTMGAISEYDEEDDESSGESEVREGDEEQEKKQKYLSPIEVLEHMRRLWDVEDTLLNELFDNYKIFFMNNLLVSQNRFRPESSGGKQSGDDRDYLHAHSAMLTKIINANIAFRRTIELKENLTDDRNLETESEKSKTQQIDLSKTEITSKQVIKAWAELQESVNCYLDSSLAAKLENKEKPGLRQLLERKEGIFRMKMMGKRVNFAGRSVISPDPYISTDQIGVPEFIARTITFPEPAKNIEKLKRCVINGAHKHPGANFIEYPNGERKALENMTLEEKKQSSIIRKWRKIVYRHMQTGDPLLVNRQPTLHKPSIMAHNAIILPKEQTIRMHYSNCKSYNADFDGDEMK.

Positions E297–E317 are enriched in acidic residues. The interval E297 to K321 is disordered.

The protein belongs to the RNA polymerase beta' chain family. Each class of RNA polymerase is assembled from 9 to 14 different polypeptides. This subunit is the largest component of RNA polymerase I.

The protein localises to the nucleus. It carries out the reaction RNA(n) + a ribonucleoside 5'-triphosphate = RNA(n+1) + diphosphate. DNA-dependent RNA polymerase catalyzes the transcription of DNA into RNA using the four ribonucleoside triphosphates as substrates. RNA polymerase I is essentially used to transcribe ribosomal DNA units. The polypeptide is DNA-directed RNA polymerase I subunit RPA1 (RPA1) (Euplotoides octocarinatus (Freshwater ciliate)).